Reading from the N-terminus, the 325-residue chain is Protease HtpX homolog (325 aa).

A helical membrane pass occupies residues Ile-20–Met-40. Zn(2+) is bound at residue His-130. The active site involves Glu-131. His-134 contributes to the Zn(2+) binding site. Helical transmembrane passes span Ile-145–Gly-165 and Val-173–Val-193. Glu-202 provides a ligand contact to Zn(2+). The interval Ser-286–Ser-325 is disordered. Residues Arg-306–Ser-325 show a composition bias toward low complexity.

It belongs to the peptidase M48B family. Requires Zn(2+) as cofactor.

The protein resides in the cell inner membrane. This is Protease HtpX homolog from Brucella melitensis biotype 2 (strain ATCC 23457).